The chain runs to 305 residues: Ribonuclease BN (305 aa).

Zn(2+) is bound by residues His-64, His-66, Asp-68, His-69, His-141, Asp-212, and His-270. Asp-68 (proton acceptor) is an active-site residue.

It belongs to the RNase Z family. RNase BN subfamily. Homodimer. It depends on Zn(2+) as a cofactor.

Its function is as follows. Zinc phosphodiesterase, which has both exoribonuclease and endoribonuclease activities. The polypeptide is Ribonuclease BN (Shigella boydii serotype 18 (strain CDC 3083-94 / BS512)).